The primary structure comprises 304 residues: Serine protease 30 (304 aa).

The first 21 residues, 1-21 (MESWARCIFLLLLQILTGGRG), serve as a signal peptide directing secretion. Residues 22 to 30 (DILHSGAGK) constitute a propeptide, activation peptide. Positions 31–271 (IVGGQDAPEG…YVDWIQRTLA (241 aa)) constitute a Peptidase S1 domain. A disulfide bridge links C57 with C73. H72 acts as the Charge relay system in catalysis. Residue N79 is glycosylated (N-linked (GlcNAc...) asparagine). D122 serves as the catalytic Charge relay system. 3 disulfide bridges follow: C155/C229, C185/C208, and C219/C247. S223 acts as the Charge relay system in catalysis. N-linked (GlcNAc...) asparagine glycans are attached at residues N232 and N273. S275 is lipidated: GPI-anchor amidated serine. A propeptide spans 276-304 (DAYGCRSRASGAYPALLLVLLAFALPESL) (removed in mature form).

The protein belongs to the peptidase S1 family. In terms of tissue distribution, expressed predominantly in kidney, small intestine and stomach and moderately in thymus, lung, spleen, testis and skin. In the kidney, expressed mainly in collecting duct of renal medulla and cortex.

It localises to the cell membrane. With respect to regulation, inhibited by aprotinin, leupeptin, benzamidine and soybean trypsin inhibitor. Partially inhibited by PMSF and DFP. Functionally, selectively cleaves synthetic peptide substrates of trypsin. Activates the epithelial sodium channel ENaC. This is Serine protease 30 (Prss30) from Rattus norvegicus (Rat).